Consider the following 679-residue polypeptide: Glycine--tRNA ligase beta subunit (679 aa).

The protein belongs to the class-II aminoacyl-tRNA synthetase family. As to quaternary structure, tetramer of two alpha and two beta subunits.

The protein localises to the cytoplasm. It catalyses the reaction tRNA(Gly) + glycine + ATP = glycyl-tRNA(Gly) + AMP + diphosphate. This chain is Glycine--tRNA ligase beta subunit, found in Streptococcus pyogenes serotype M4 (strain MGAS10750).